Here is a 511-residue protein sequence, read N- to C-terminus: uncharacterized protein (511 aa).

The segment at 59 to 79 is disordered; the sequence is VPVAANDDQPDGSRQSVRGRQ.

The protein belongs to the transposase 25 family.

This is an uncharacterized protein from Sinorhizobium fredii (strain NBRC 101917 / NGR234).